A 255-amino-acid polypeptide reads, in one-letter code: Imidazole glycerol phosphate synthase subunit HisF (255 aa).

Active-site residues include Asp11 and Asp130.

Belongs to the HisA/HisF family. In terms of assembly, heterodimer of HisH and HisF.

It localises to the cytoplasm. It catalyses the reaction 5-[(5-phospho-1-deoxy-D-ribulos-1-ylimino)methylamino]-1-(5-phospho-beta-D-ribosyl)imidazole-4-carboxamide + L-glutamine = D-erythro-1-(imidazol-4-yl)glycerol 3-phosphate + 5-amino-1-(5-phospho-beta-D-ribosyl)imidazole-4-carboxamide + L-glutamate + H(+). Its pathway is amino-acid biosynthesis; L-histidine biosynthesis; L-histidine from 5-phospho-alpha-D-ribose 1-diphosphate: step 5/9. In terms of biological role, IGPS catalyzes the conversion of PRFAR and glutamine to IGP, AICAR and glutamate. The HisF subunit catalyzes the cyclization activity that produces IGP and AICAR from PRFAR using the ammonia provided by the HisH subunit. The polypeptide is Imidazole glycerol phosphate synthase subunit HisF (Rhodopseudomonas palustris (strain ATCC BAA-98 / CGA009)).